The primary structure comprises 427 residues: Tyrosine--tRNA ligase (427 aa).

An L-tyrosine-binding site is contributed by tyrosine 33. The short motif at 38 to 47 (PTAPSLHVGN) is the 'HIGH' region element. L-tyrosine contacts are provided by tyrosine 168 and glutamine 172. Positions 228–232 (KFGKS) match the 'KMSKS' region motif. An ATP-binding site is contributed by lysine 231. An S4 RNA-binding domain is found at 358–426 (EHMLDLVAST…GKKHHYLIKV (69 aa)).

The protein belongs to the class-I aminoacyl-tRNA synthetase family. TyrS type 1 subfamily. Homodimer.

The protein resides in the cytoplasm. The catalysed reaction is tRNA(Tyr) + L-tyrosine + ATP = L-tyrosyl-tRNA(Tyr) + AMP + diphosphate + H(+). Its function is as follows. Catalyzes the attachment of tyrosine to tRNA(Tyr) in a two-step reaction: tyrosine is first activated by ATP to form Tyr-AMP and then transferred to the acceptor end of tRNA(Tyr). The chain is Tyrosine--tRNA ligase from Amoebophilus asiaticus (strain 5a2).